We begin with the raw amino-acid sequence, 251 residues long: uncharacterized protein (251 aa).

The first 25 residues, 1–25 (MSAGRLNKKSLGIVMLLSVGLLLAG), serve as a signal peptide directing secretion. A lipid anchor (N-palmitoyl cysteine) is attached at Cys-26. Cys-26 carries the S-diacylglycerol cysteine lipid modification. In terms of domain architecture, LysM spans 40 to 84 (SVYTVKRGDTLYRISRTTGTSVKELARLNGISPPYTIEVGQKLKL). Positions 93 to 112 (TRKSTAKSTTKTASVTPSSA) are enriched in low complexity. Positions 93–115 (TRKSTAKSTTKTASVTPSSAVPK) are disordered.

It belongs to the peptidase M23B family.

It is found in the cell inner membrane. This is an uncharacterized protein from Escherichia coli (strain K12).